The chain runs to 1703 residues: Gingipain R1 (1703 aa).

Positions 1–20 (MNKFVSIALCSSLLGGMAFA) are cleaved as a signal peptide. The propeptide occupies 21 to 224 (QQTELGRNPN…RMFMNYEPGR (204 aa)). Positions 302, 324, 327, 329, 331, 385, and 390 each coordinate Ca(2+). Residue H435 is the Proton donor of the active site. Residue C468 is the Nucleophile of the active site. Ca(2+) contacts are provided by F473, E482, D516, E517, E520, and H526. Positions 940-968 (WDAPNGTPNPNPNPNPNPNPGTTTLSESF) are disordered. The segment covering 946–958 (TPNPNPNPNPNPN) has biased composition (pro residues).

This sequence belongs to the peptidase C25 family.

It localises to the secreted. It catalyses the reaction Hydrolysis of proteins and small molecule substrates, with a preference for Arg in P1.. Functionally, thiol protease. Acts synergistically with RgpB to catalyze the maturation of fimbrial subunits, such as FimA. Its proteolytic activity is a major factor in both periodontal tissue destruction and in evasion of host defense mechanisms. The polypeptide is Gingipain R1 (Porphyromonas gingivalis (strain ATCC 33277 / DSM 20709 / CIP 103683 / JCM 12257 / NCTC 11834 / 2561)).